The following is a 213-amino-acid chain: Putative tRNA methyltransferase MPN_351 (213 aa).

Belongs to the TrmK family.

It localises to the cytoplasm. In Mycoplasma pneumoniae (strain ATCC 29342 / M129 / Subtype 1) (Mycoplasmoides pneumoniae), this protein is Putative tRNA methyltransferase MPN_351.